We begin with the raw amino-acid sequence, 272 residues long: MEYNPPNTRERIAARRQRLRQPSSEPAIPGWRRRFIDGLQSGRIVSGAVFVVSCLALFYVLFSSQFRVQTVEVVGVEFLSPERIVNAVPLRGWPIWLIDEEQAVAPLLRSPFVEHARLSLILPDRARIVIVERQPVIYWRSGGVDYLVDRQGFVIEPATVAPPADALVIVDSSNLPVEPQMQLDPDALALARELAWRLPNELGLRPAQIGWDFGLGVFIRTEQDQMVVFGRSERLTRKLMILAYLLNDGTPFTYLDLRPMNPFYQNRTDGRS.

The Cytoplasmic portion of the chain corresponds to 1-43 (MEYNPPNTRERIAARRQRLRQPSSEPAIPGWRRRFIDGLQSGR). Residues 44-64 (IVSGAVFVVSCLALFYVLFSS) form a helical membrane-spanning segment. The Extracellular portion of the chain corresponds to 65-272 (QFRVQTVEVV…FYQNRTDGRS (208 aa)). A POTRA domain is found at 66-133 (FRVQTVEVVG…DRARIVIVER (68 aa)).

Belongs to the FtsQ/DivIB family. FtsQ subfamily.

It localises to the cell membrane. In terms of biological role, essential cell division protein. This Chloroflexus aggregans (strain MD-66 / DSM 9485) protein is Cell division protein FtsQ.